The following is a 478-amino-acid chain: Glutamyl-tRNA(Gln) amidotransferase subunit A (478 aa).

Residues Lys-72 and Ser-147 each act as charge relay system in the active site. Ser-171 (acyl-ester intermediate) is an active-site residue.

It belongs to the amidase family. GatA subfamily. As to quaternary structure, heterotrimer of A, B and C subunits.

The enzyme catalyses L-glutamyl-tRNA(Gln) + L-glutamine + ATP + H2O = L-glutaminyl-tRNA(Gln) + L-glutamate + ADP + phosphate + H(+). In terms of biological role, allows the formation of correctly charged Gln-tRNA(Gln) through the transamidation of misacylated Glu-tRNA(Gln) in organisms which lack glutaminyl-tRNA synthetase. The reaction takes place in the presence of glutamine and ATP through an activated gamma-phospho-Glu-tRNA(Gln). This is Glutamyl-tRNA(Gln) amidotransferase subunit A from Saccharolobus solfataricus (strain ATCC 35092 / DSM 1617 / JCM 11322 / P2) (Sulfolobus solfataricus).